The chain runs to 135 residues: Ribosome-binding factor A (135 aa).

The protein belongs to the RbfA family. Monomer. Binds 30S ribosomal subunits, but not 50S ribosomal subunits or 70S ribosomes.

It is found in the cytoplasm. One of several proteins that assist in the late maturation steps of the functional core of the 30S ribosomal subunit. Associates with free 30S ribosomal subunits (but not with 30S subunits that are part of 70S ribosomes or polysomes). Required for efficient processing of 16S rRNA. May interact with the 5'-terminal helix region of 16S rRNA. The polypeptide is Ribosome-binding factor A (Rhizobium meliloti (strain 1021) (Ensifer meliloti)).